We begin with the raw amino-acid sequence, 218 residues long: Cytochrome b6 (218 aa).

The helical transmembrane segment at 35 to 55 (IFYCLGGITLVCFLIQFATGF) threads the bilayer. Cys38 provides a ligand contact to heme c. Residues His89 and His103 each contribute to the heme b site. 3 helical membrane passes run 93–113 (ASMM…TGGF), 119–139 (LTWV…VTGY), and 189–209 (LHTF…FLMI). The heme b site is built by His190 and His205.

It belongs to the cytochrome b family. PetB subfamily. In terms of assembly, the 4 large subunits of the cytochrome b6-f complex are cytochrome b6, subunit IV (17 kDa polypeptide, PetD), cytochrome f and the Rieske protein, while the 4 small subunits are PetG, PetL, PetM and PetN. The complex functions as a dimer. The cofactor is heme b. Requires heme c as cofactor.

The protein localises to the cellular thylakoid membrane. Its function is as follows. Component of the cytochrome b6-f complex, which mediates electron transfer between photosystem II (PSII) and photosystem I (PSI), cyclic electron flow around PSI, and state transitions. The protein is Cytochrome b6 of Prochlorococcus marinus subsp. pastoris (strain CCMP1986 / NIES-2087 / MED4).